Here is a 686-residue protein sequence, read N- to C-terminus: Protein-glutamine gamma-glutamyltransferase 2 (686 aa).

Alanine 2 carries the N-acetylalanine modification. 2 cysteine pairs are disulfide-bonded: cysteine 230/cysteine 370 and cysteine 370/cysteine 371. Active-site residues include cysteine 277, histidine 335, and aspartate 358. Ca(2+) is bound by residues asparagine 398, aspartate 400, glutamate 437, glutamate 447, and glutamate 452. Lysine 468 is modified (N6-acetyllysine). 476–483 serves as a coordination point for GTP; sequence RIRVGDSM. Glutamate 538 is a Ca(2+) binding site. 579-582 lines the GTP pocket; it reads RDLY. Glutamine 632 participates in a covalent cross-link: Isoglutamyl lysine isopeptide (Gln-Lys) (interchain with K-?).

This sequence belongs to the transglutaminase superfamily. Transglutaminase family. As to quaternary structure, monomer. Interacts with phospholipase C; promoting alpha-1 adrenergic receptor signaling. Interacts with PLCD1. Ca(2+) is required as a cofactor. In terms of processing, disulfide bond formation inactivates the calcium-dependent acyltransferase activity. Cys-370 can form disulfide bonds with both Cys-230 and Cys-371: formation of a disulfide bond between Cys-230 and Cys-370 facilitates formation of the disulfide between Cys-370 and Cys-371, which promotes inactivation of the acyltransferase activity. May also form interchain disulfids between Cys-230 and Cys-370. Ca(2+) protects against disulfide bond formation and inactivation. Post-translationally, auto-transglutaminated: Forms covalent cross-links mediated by transglutaminase between Gln-632 and the epsilon-amino group of a lysine residue of itself or HMGB1, forming homopolymers and heteropolymers, respectively. S-nitrosylated, leading to inactivation of the acyltransferase activity.

It localises to the cytoplasm. The protein resides in the cytosol. It is found in the nucleus. Its subcellular location is the chromosome. The protein localises to the secreted. It localises to the extracellular space. The protein resides in the extracellular matrix. It is found in the cell membrane. Its subcellular location is the mitochondrion. It catalyses the reaction L-glutaminyl-[protein] + L-lysyl-[protein] = [protein]-L-lysyl-N(6)-5-L-glutamyl-[protein] + NH4(+). The catalysed reaction is L-glutaminyl-[protein] + serotonin = 5-serotonyl-L-glutamyl-[protein] + NH4(+). The enzyme catalyses L-glutaminyl-[protein] + dopamine = 5-dopaminyl-L-glutamyl-[protein] + NH4(+). It carries out the reaction L-glutaminyl-[protein] + histamine = 5-histaminyl-L-glutamyl-[protein] + NH4(+). It catalyses the reaction L-glutaminyl-[protein] + (R)-noradrenaline = 5-(R)-noradrenalinyl-L-glutamyl-[protein] + NH4(+). The catalysed reaction is L-glutaminyl-[protein] + H2O = L-glutamyl-[protein] + NH4(+). Acyltransferase activity is regulated by the binding of GTP and Ca(2+): inactivated by GTP, which stabilizes its closed structure, thereby obstructing the accessibility of substrates to the active sites. In contrast, Ca(2+) acts as a cofactor by inducing conformational change to the active open form. In absence of Ca(2+), Mg(2+) may bind Ca(2+)-binding sites, promoting GTP-binding and subsequent inhibition of the acyltransferase activity. Extracellularly reduced and activated by CLIC3. Its function is as follows. Calcium-dependent acyltransferase that catalyzes the formation of covalent bonds between peptide-bound glutamine and various primary amines, such as gamma-amino group of peptide-bound lysine, or mono- and polyamines, thereby producing cross-linked or aminated proteins, respectively. Involved in many biological processes, such as bone development, angiogenesis, wound healing, cellular differentiation, chromatin modification and apoptosis. Acts as a protein-glutamine gamma-glutamyltransferase by mediating the cross-linking of proteins, such as ACO2, HSPB6, FN1, HMGB1, RAP1GDS1, SLC25A4/ANT1, SPP1 and WDR54. Under physiological conditions, the protein cross-linking activity is inhibited by GTP; inhibition is relieved by Ca(2+) in response to various stresses. When secreted, catalyzes cross-linking of proteins of the extracellular matrix, such as FN1 and SPP1 resulting in the formation of scaffolds. Plays a key role during apoptosis, both by (1) promoting the cross-linking of cytoskeletal proteins resulting in condensation of the cytoplasm, and by (2) mediating cross-linking proteins of the extracellular matrix, resulting in the irreversible formation of scaffolds that stabilize the integrity of the dying cells before their clearance by phagocytosis, thereby preventing the leakage of harmful intracellular components. In addition to protein cross-linking, can use different monoamine substrates to catalyze a vast array of protein post-translational modifications: mediates aminylation of serotonin, dopamine, noradrenaline or histamine into glutamine residues of target proteins to generate protein serotonylation, dopaminylation, noradrenalinylation or histaminylation, respectively. Mediates protein serotonylation of small GTPases during activation and aggregation of platelets, leading to constitutive activation of these GTPases. Plays a key role in chromatin organization by mediating serotonylation and dopaminylation of histone H3. Catalyzes serotonylation of 'Gln-5' of histone H3 (H3Q5ser) during serotonergic neuron differentiation, thereby facilitating transcription. Acts as a mediator of neurotransmission-independent role of nuclear dopamine in ventral tegmental area (VTA) neurons: catalyzes dopaminylation of 'Gln-5' of histone H3 (H3Q5dop), thereby regulating relapse-related transcriptional plasticity in the reward system. Regulates vein remodeling by mediating serotonylation and subsequent inactivation of ATP2A2/SERCA2. Also acts as a protein deamidase by mediating the side chain deamidation of specific glutamine residues of proteins to glutamate. Catalyzes specific deamidation of protein gliadin, a component of wheat gluten in the diet. May also act as an isopeptidase cleaving the previously formed cross-links. Also able to participate in signaling pathways independently of its acyltransferase activity: acts as a signal transducer in alpha-1 adrenergic receptor-mediated stimulation of phospholipase C-delta (PLCD) activity and is required for coupling alpha-1 adrenergic agonists to the stimulation of phosphoinositide lipid metabolism. This chain is Protein-glutamine gamma-glutamyltransferase 2, found in Mus musculus (Mouse).